Consider the following 570-residue polypeptide: Sulfite reductase [NADPH] hemoprotein beta-component (570 aa).

Positions 434, 440, 479, and 483 each coordinate [4Fe-4S] cluster. C483 contributes to the siroheme binding site.

The protein belongs to the nitrite and sulfite reductase 4Fe-4S domain family. Alpha(8)-beta(8). The alpha component is a flavoprotein, the beta component is a hemoprotein. It depends on siroheme as a cofactor. [4Fe-4S] cluster serves as cofactor.

The catalysed reaction is hydrogen sulfide + 3 NADP(+) + 3 H2O = sulfite + 3 NADPH + 4 H(+). It participates in sulfur metabolism; hydrogen sulfide biosynthesis; hydrogen sulfide from sulfite (NADPH route): step 1/1. Functionally, component of the sulfite reductase complex that catalyzes the 6-electron reduction of sulfite to sulfide. This is one of several activities required for the biosynthesis of L-cysteine from sulfate. This chain is Sulfite reductase [NADPH] hemoprotein beta-component, found in Shigella dysenteriae serotype 1 (strain Sd197).